A 355-amino-acid polypeptide reads, in one-letter code: Protein RecA (355 aa).

ATP is bound at residue 67-74 (GPESSGKT). The interval 336-355 (NSAASDYEDNENEEMNNEEF) is disordered. Residues 341–355 (DYEDNENEEMNNEEF) show a composition bias toward acidic residues.

Belongs to the RecA family.

Its subcellular location is the cytoplasm. Its function is as follows. Can catalyze the hydrolysis of ATP in the presence of single-stranded DNA, the ATP-dependent uptake of single-stranded DNA by duplex DNA, and the ATP-dependent hybridization of homologous single-stranded DNAs. It interacts with LexA causing its activation and leading to its autocatalytic cleavage. The chain is Protein RecA from Photorhabdus laumondii subsp. laumondii (strain DSM 15139 / CIP 105565 / TT01) (Photorhabdus luminescens subsp. laumondii).